The sequence spans 140 residues: Trafficking protein particle complex subunit 2-like protein (140 aa).

This sequence belongs to the TRAPP small subunits family. Sedlin subfamily.

This chain is Trafficking protein particle complex subunit 2-like protein (trappc2l), found in Dictyostelium discoideum (Social amoeba).